The chain runs to 101 residues: Small ribosomal subunit protein bS18c (101 aa).

Residues 1–19 show a composition bias toward basic residues; that stretch reads MDKSKRPFRKSKRSFRRRL. Disordered regions lie at residues 1-23 and 82-101; these read MDKS…PPIG and KQFE…TRNK.

The protein belongs to the bacterial ribosomal protein bS18 family. Part of the 30S ribosomal subunit.

The protein resides in the plastid. Its subcellular location is the chloroplast. The sequence is that of Small ribosomal subunit protein bS18c from Drimys granadensis.